A 923-amino-acid polypeptide reads, in one-letter code: Isoleucine--tRNA ligase (923 aa).

Positions 57–67 match the 'HIGH' region motif; it reads PYANGHIHIGH. Residue Glu560 coordinates L-isoleucyl-5'-AMP. A 'KMSKS' region motif is present at residues 601–605; the sequence is KMSKS. ATP is bound at residue Lys604. The Zn(2+) site is built by Cys895, Cys898, Cys915, and Cys918.

The protein belongs to the class-I aminoacyl-tRNA synthetase family. IleS type 1 subfamily. Monomer. Requires Zn(2+) as cofactor.

The protein localises to the cytoplasm. It carries out the reaction tRNA(Ile) + L-isoleucine + ATP = L-isoleucyl-tRNA(Ile) + AMP + diphosphate. In terms of biological role, catalyzes the attachment of isoleucine to tRNA(Ile). As IleRS can inadvertently accommodate and process structurally similar amino acids such as valine, to avoid such errors it has two additional distinct tRNA(Ile)-dependent editing activities. One activity is designated as 'pretransfer' editing and involves the hydrolysis of activated Val-AMP. The other activity is designated 'posttransfer' editing and involves deacylation of mischarged Val-tRNA(Ile). In Geobacter sulfurreducens (strain ATCC 51573 / DSM 12127 / PCA), this protein is Isoleucine--tRNA ligase.